We begin with the raw amino-acid sequence, 211 residues long: Mediator of RNA polymerase II transcription subunit 20 (211 aa).

Belongs to the Mediator complex subunit 20 family. As to quaternary structure, component of the Mediator complex.

It is found in the nucleus. In terms of biological role, component of the Mediator complex, a coactivator involved in the regulated transcription of nearly all RNA polymerase II-dependent genes. Mediator functions as a bridge to convey information from gene-specific regulatory proteins to the basal RNA polymerase II transcription machinery. Mediator is recruited to promoters by direct interactions with regulatory proteins and serves as a scaffold for the assembly of a functional preinitiation complex with RNA polymerase II and the general transcription factors. The sequence is that of Mediator of RNA polymerase II transcription subunit 20 (med20) from Xenopus laevis (African clawed frog).